The sequence spans 507 residues: Probable cyclic di-GMP phosphodiesterase PdeG (507 aa).

A run of 2 helical transmembrane segments spans residues 4–24 and 217–237; these read TLIPILVAICLFITGVAILNI and LIDKGFGILIFILLIACAAAF. Positions 246-500 constitute an EAL domain; the sequence is SATPEEILRR…DLVKIILSKP (255 aa).

It localises to the cell membrane. It carries out the reaction 3',3'-c-di-GMP + H2O = 5'-phosphoguanylyl(3'-&gt;5')guanosine + H(+). Phosphodiesterase (PDE) that catalyzes the hydrolysis of cyclic-di-GMP (c-di-GMP) to 5'-pGpG. This Escherichia coli (strain K12) protein is Probable cyclic di-GMP phosphodiesterase PdeG.